The chain runs to 122 residues: Putative iron-sulfur cluster insertion protein ErpA (122 aa).

Iron-sulfur cluster contacts are provided by Cys50, Cys114, and Cys116.

Belongs to the HesB/IscA family. As to quaternary structure, homodimer. Iron-sulfur cluster is required as a cofactor.

Its function is as follows. Required for insertion of 4Fe-4S clusters. In Cupriavidus metallidurans (strain ATCC 43123 / DSM 2839 / NBRC 102507 / CH34) (Ralstonia metallidurans), this protein is Putative iron-sulfur cluster insertion protein ErpA.